The primary structure comprises 290 residues: 7-methylguanosine phosphate-specific 5'-nucleotidase A (290 aa).

Catalysis depends on Asp39, which acts as the Nucleophile. Mg(2+)-binding residues include Asp39 and Asp41. Asp41 acts as the Proton donor in catalysis. Glu86 serves as a coordination point for CMP. Residue Glu86 participates in N(7)-methyl-GMP binding. Residues 154–155 (SA) and Lys203 contribute to the substrate site. Residue Asp228 coordinates Mg(2+).

This sequence belongs to the pyrimidine 5'-nucleotidase family. As to quaternary structure, monomer.

It is found in the cytoplasm. The enzyme catalyses N(7)-methyl-GMP + H2O = N(7)-methylguanosine + phosphate. The catalysed reaction is CMP + H2O = cytidine + phosphate. It catalyses the reaction a ribonucleoside 5'-phosphate + H2O = a ribonucleoside + phosphate. In terms of biological role, specifically hydrolyzes 7-methylguanosine monophosphate (m(7)GMP) to 7-methylguanosine and inorganic phosphate. The specific activity for m(7)GMP may protect cells against undesired salvage of m(7)GMP and its incorporation into nucleic acids. Also has weak activity for CMP. UMP and purine nucleotides are poor substrates. The protein is 7-methylguanosine phosphate-specific 5'-nucleotidase A (Nt5c3b-a) of Xenopus laevis (African clawed frog).